A 282-amino-acid chain; its full sequence is Serine/threonine-protein kinase Aurora-2 (282 aa).

In terms of domain architecture, Protein kinase spans 19–270 (FDIGKPLGRG…LHKLLEHPWI (252 aa)). Residues 25–33 (LGRGKFGHV) and Lys-48 contribute to the ATP site. Asp-142 functions as the Proton acceptor in the catalytic mechanism. Ser-164 carries the post-translational modification Phosphoserine. Position 173 is a phosphothreonine (Thr-173).

Belongs to the protein kinase superfamily. Ser/Thr protein kinase family. Aurora subfamily. Phosphorylation at Thr-173 may regulate activity and degradation of AUR2 in a cell cycle dependent manner. As to expression, abundant in roots, flowers and flower buds, low or absent in expanded leaves, stems and siliques.

It is found in the nucleus membrane. The protein resides in the cytoplasm. Its subcellular location is the cytoskeleton. It localises to the spindle. The protein localises to the spindle pole. The catalysed reaction is L-seryl-[protein] + ATP = O-phospho-L-seryl-[protein] + ADP + H(+). The enzyme catalyses L-threonyl-[protein] + ATP = O-phospho-L-threonyl-[protein] + ADP + H(+). Its function is as follows. Phosphorylates specifically 'Ser-10' of histone H3 in vitro. Associates with cytoskeletal structures that are necessary for cytokinesis and with the microtubule spindle. Might colocalize with gamma-tubulin and function in microtubule organizing centers (MTOCs). This is Serine/threonine-protein kinase Aurora-2 (AUR2) from Arabidopsis thaliana (Mouse-ear cress).